The primary structure comprises 381 residues: Regulatory protein RapF (381 aa).

Mn(2+) contacts are provided by Leu-40, Met-43, and Glu-45. TPR repeat units lie at residues 101 to 137 (YYFN…VKDR), 148 to 181 (SESY…NIRL), 182 to 215 (LQCH…AEAE), 222 to 255 (GRTL…FEES), 262 to 295 (PQAY…SQKA), and 337 to 370 (EDFA…RQLI).

It belongs to the Rap family. Monomer. Is monomeric either alone or in complex with PhrF. Interacts specifically with the C-terminal DNA-binding domain of ComA. Interacts with PhrF.

It localises to the cytoplasm. Its activity is regulated as follows. Inhibited by PhrF, which prevents RapF-ComA interaction. Interaction with PhrF induces a conformational change in RapF, which is propagated to the ComA binding site and causes the dissociation of ComA from RapF. Its function is as follows. Involved in the regulation of genetic competence development. Inhibits the activity of ComA, a transcriptional factor that regulates the development of genetic competence. Acts by binding to ComA, leading to the inhibition of its DNA-binding activity. May also affect transcription independently of ComA. This chain is Regulatory protein RapF (rapF), found in Bacillus subtilis (strain 168).